A 295-amino-acid chain; its full sequence is Defective in cullin neddylation protein 1 (295 aa).

The region spanning 8-45 is the UBA-like domain; that stretch reads QKTKLRQFVQWTQVTEAVSLNFLAKANWNIEYAMTLYF. One can recognise a DCUN1 domain in the interval 60–272; it reads VDRSNIERLF…LIDQFVDYCR (213 aa).

In terms of assembly, interacts with the cullin cul-3. Interacts with ubiquitin via its UBA-like domain. Interacts with ned-8/nedd8.

The protein localises to the nucleus. In terms of biological role, required for neddylation of cullin components of SCF-type E3 ubiquitin ligase complexes. Neddylation of cullins play an essential role in the regulation of SCF-type complexes activity. Does not act by preventing deneddylation, but rather facilitates neddylation, possibly by acting with rbx-1 to recruit the Nedd8-charged E2 enzyme to the cullin component of SCF-type complexes. This is Defective in cullin neddylation protein 1 (dcn-1) from Caenorhabditis elegans.